The sequence spans 217 residues: MSEAMMWLLVRGVWETLAMTFVSGFFGFVIGLPVGVLLYVTRPGQIMENARLYRSLSAVVNIFRSIPFIILLVWMIPFTRIIVGTSIGLQAAIVPLTVGAAPFIARIVENALLEIPAGLIEASRAMGATPLQIVRKILLPEALPGLVNAATITLITLVGYSAMGGAVGAGGLGQIGYQYGYIGYNATVMNTVLVLLVVLVYLIQLSGDRIVRAVTHK.

The Periplasmic segment spans residues 1 to 19; that stretch reads MSEAMMWLLVRGVWETLAM. Positions 13–204 constitute an ABC transmembrane type-1 domain; that stretch reads VWETLAMTFV…LLVVLVYLIQ (192 aa). A helical membrane pass occupies residues 20 to 40; that stretch reads TFVSGFFGFVIGLPVGVLLYV. Over 41-67 the chain is Cytoplasmic; it reads TRPGQIMENARLYRSLSAVVNIFRSIP. The helical transmembrane segment at 68–88 threads the bilayer; sequence FIILLVWMIPFTRIIVGTSIG. The Periplasmic segment spans residues 89–92; it reads LQAA. The chain crosses the membrane as a helical span at residues 93-113; it reads IVPLTVGAAPFIARIVENALL. Over 114–151 the chain is Cytoplasmic; the sequence is EIPAGLIEASRAMGATPLQIVRKILLPEALPGLVNAAT. The helical transmembrane segment at 152-172 threads the bilayer; sequence ITLITLVGYSAMGGAVGAGGL. The Periplasmic segment spans residues 173–185; that stretch reads GQIGYQYGYIGYN. Residues 186–206 form a helical membrane-spanning segment; sequence ATVMNTVLVLLVVLVYLIQLS. The Cytoplasmic segment spans residues 207–217; that stretch reads GDRIVRAVTHK.

The protein belongs to the binding-protein-dependent transport system permease family. CysTW subfamily.

It is found in the cell inner membrane. Its function is as follows. Part of the binding-protein-dependent transport system for D-methionine and the toxic methionine analog alpha-methyl-methionine. Probably responsible for the translocation of the substrate across the membrane. This Salmonella typhi protein is D-methionine transport system permease protein MetI (metI).